Reading from the N-terminus, the 434-residue chain is Probable phosphoglucosamine mutase (434 aa).

The active-site Phosphoserine intermediate is S91. Residues S91, D229, D231, and D233 each contribute to the Mg(2+) site. At S91 the chain carries Phosphoserine.

This sequence belongs to the phosphohexose mutase family. Mg(2+) serves as cofactor. Post-translationally, activated by phosphorylation.

The enzyme catalyses alpha-D-glucosamine 1-phosphate = D-glucosamine 6-phosphate. Catalyzes the conversion of glucosamine-6-phosphate to glucosamine-1-phosphate. This Methanosarcina barkeri (strain Fusaro / DSM 804) protein is Probable phosphoglucosamine mutase.